Reading from the N-terminus, the 342-residue chain is Phosphoribosylformylglycinamidine cyclo-ligase (342 aa).

This sequence belongs to the AIR synthase family.

It is found in the cytoplasm. It carries out the reaction 2-formamido-N(1)-(5-O-phospho-beta-D-ribosyl)acetamidine + ATP = 5-amino-1-(5-phospho-beta-D-ribosyl)imidazole + ADP + phosphate + H(+). Its pathway is purine metabolism; IMP biosynthesis via de novo pathway; 5-amino-1-(5-phospho-D-ribosyl)imidazole from N(2)-formyl-N(1)-(5-phospho-D-ribosyl)glycinamide: step 2/2. The sequence is that of Phosphoribosylformylglycinamidine cyclo-ligase from Latilactobacillus sakei subsp. sakei (strain 23K) (Lactobacillus sakei subsp. sakei).